The following is a 424-amino-acid chain: GTPase Obg (424 aa).

Residues 1-158 form the Obg domain; it reads MFYDQAKIYV…RNLLLELKLL (158 aa). In terms of domain architecture, OBG-type G spans 159 to 329; sequence ADVGLVGFPN…LVYAAAKALP (171 aa). GTP is bound by residues 165-172, 190-194, 212-215, 282-285, and 310-312; these read GFPNVGKS, FTTLV, DIPG, NKMD, and SAA. 2 residues coordinate Mg(2+): Ser172 and Thr192. The region spanning 347–424 is the OCT domain; that stretch reads TQASAPHRFE…IAGIEFEWEE (78 aa).

This sequence belongs to the TRAFAC class OBG-HflX-like GTPase superfamily. OBG GTPase family. Monomer. Requires Mg(2+) as cofactor.

Its subcellular location is the cytoplasm. An essential GTPase which binds GTP, GDP and possibly (p)ppGpp with moderate affinity, with high nucleotide exchange rates and a fairly low GTP hydrolysis rate. Plays a role in control of the cell cycle, stress response, ribosome biogenesis and in those bacteria that undergo differentiation, in morphogenesis control. This is GTPase Obg from Desulfitobacterium hafniense (strain Y51).